The primary structure comprises 156 residues: Aspercryptin biosynthesis cluster protein B (156 aa).

A signal peptide spans 1–39 (MRMANRIGAGRKSALQLSHLRTRLTSSAAAVATAPTLDP).

The protein belongs to the YciI family.

It participates in secondary metabolite biosynthesis. In terms of biological role, part of the gene cluster that mediates the biosynthesis of aspercryptins, linear lipopeptides built from six amino acids including 2 highly unusual and nonproteogenic amino acids, 2-amino-octanoic acid (2aoa) and 2-amino-dodecanol (2adol). The core structure of aspercryptins is as follows: Ser/Ala-Thr-Ile/Val-2aoa-Aasn-2adol. The first step of aspercryptin biosynthesis is the generation of the fatty acid precursors, octanoic and dodecanoic acids, by the FAS subunits atnF and atnM. The fatty acid precursors are likely transformed into the corresponding alpha-amino fatty acids in three steps. First, they are hydroxylated by the cytochrome P450 monooxygenase atnE, then oxidized to the corresponding alpha-keto acids by the NAD(P)-dependent oxidoreductase atnD, and finally converted to the alpha-amino fatty acids by the PLP-dependent aminotransferases atnH or atnJ. the alpha-amino fatty acids, 2-amino-octanoic and 2-amino-dodecanoic acids, are recognized, activated, and covalently tethered to the NRPS atnA by its fourth and sixth adenylation domains. The second module of atnA is the Thr module and contains an epimerase (E) domain responsible for the epimerization of Thr to D-allo-Thr. Additionally, despite atnA having only one epimerase domain, the first amino acid of aspercryptin A1 is D-Ser, suggesting that serine is either loaded directly as D-Ser on the first module or that the epimerase domain in the threonine module epimerizes both L-Ser and L-Thr. After condensation of the hexapeptide of aspercryptin, the C-terminal reductase (TE) domain might be involved in the reductive release and production of the aldehyde hexapeptide. Further reduction would generate aspercryptins. The variety of aspercryptins produced reflects the flexibility of the atnA NRPS, allowing incorporation of alanine instead of serine, valine for isoleucine, and a C10 fatty amino alcohol instead of the C12 version. AtnB seems to be involved in the selectivity for Ile versus Val by the third module. Moreover, type B, C and D aspercryptins have an additional N-terminal cichorine, acetyl and propionyl group respectively. In Emericella nidulans (strain FGSC A4 / ATCC 38163 / CBS 112.46 / NRRL 194 / M139) (Aspergillus nidulans), this protein is Aspercryptin biosynthesis cluster protein B.